The chain runs to 342 residues: Replication factor C subunit 3 (342 aa).

Position 63–70 (63–70) interacts with ATP; that stretch reads GPPGTGKT.

The protein belongs to the activator 1 small subunits family. Heteropentamer of subunits rfc1, rfc2, rfc3, rfc4 and rfc5 that forms a complex (RFC) with PCNA in the presence of ATP. Two other complexes exist where rfc1 can be replaced by either ctf18 or elg1 to form the ctf18-RFC or the elg1-RFC complexes respectively.

The protein localises to the nucleus. Functionally, the elongation of primed DNA templates by DNA polymerase delta and epsilon requires the action of the accessory proteins PCNA and activator 1. Subunit 3 binds ATP. Also involved in replication and DNA damage checkpoint controls, probably functioning as a checkpoint sensor. The sequence is that of Replication factor C subunit 3 (rfc3) from Schizosaccharomyces pombe (strain 972 / ATCC 24843) (Fission yeast).